Reading from the N-terminus, the 239-residue chain is MSLMKEMLSAGVHFGHKKAFWNPQMKEYIFGINHGVHIINLEKTVPLFQDAVNFVGKTVANGGKVLFVGTKRQAQDIIEAEAKRCGMPFVSHRWLGGMLTNYKTVRQSIKRLAQLEKMKEDGTFESLTKKEMLQNIRTIEKLEKVLGGIKEMGGLPDAIVVIDSNKEHIAIQEAQKLGIKVVSIVDTNSNPEGIDYIIPGNDDAVKSISFYMKKFADAVIDAQGLDRAVEAKAEETTEA.

It belongs to the universal ribosomal protein uS2 family.

The protein is Small ribosomal subunit protein uS2 of Francisella philomiragia subsp. philomiragia (strain ATCC 25017 / CCUG 19701 / FSC 153 / O#319-036).